Consider the following 121-residue polypeptide: Large ribosomal subunit protein bL12 (121 aa).

It belongs to the bacterial ribosomal protein bL12 family. In terms of assembly, homodimer. Part of the ribosomal stalk of the 50S ribosomal subunit. Forms a multimeric L10(L12)X complex, where L10 forms an elongated spine to which 2 to 4 L12 dimers bind in a sequential fashion. Binds GTP-bound translation factors.

Its function is as follows. Forms part of the ribosomal stalk which helps the ribosome interact with GTP-bound translation factors. Is thus essential for accurate translation. The chain is Large ribosomal subunit protein bL12 from Clostridium perfringens (strain ATCC 13124 / DSM 756 / JCM 1290 / NCIMB 6125 / NCTC 8237 / Type A).